We begin with the raw amino-acid sequence, 405 residues long: S-adenosylmethionine synthase (405 aa).

141 to 146 (GQGSVD) provides a ligand contact to ATP.

It belongs to the AdoMet synthase 2 family. Requires Mg(2+) as cofactor.

It carries out the reaction L-methionine + ATP + H2O = S-adenosyl-L-methionine + phosphate + diphosphate. The protein operates within amino-acid biosynthesis; S-adenosyl-L-methionine biosynthesis; S-adenosyl-L-methionine from L-methionine: step 1/1. In terms of biological role, catalyzes the formation of S-adenosylmethionine from methionine and ATP. The chain is S-adenosylmethionine synthase from Methanococcus maripaludis (strain C7 / ATCC BAA-1331).